The chain runs to 249 residues: Chromosome segregation and cytokinesis defective protein 1 (249 aa).

Residues 12 to 48 (VVAMADTLETRVKDLLEEYKKKLREVALQTAKAESDR) are a coiled coil. Disordered regions lie at residues 70 to 89 (PDDF…AAVA), 94 to 183 (LPSE…PEKP), and 208 to 249 (TTAT…GTSV). Residues 73 to 85 (FYIESGEEEEEGE) are compositionally biased toward acidic residues. Over residues 109–126 (QKTSIPIGQNSGRNTVQV) the composition is skewed to polar residues. The span at 224–236 (SGAASKKAAAAAG) shows a compositional bias: low complexity.

The protein belongs to the borealin family. Highly divergent. Component of the CPC complex which consists of icp-1; csc-1; bir-1 and air-2. Within the complex interacts with Aurora B/air-2, bir-1 and icp-1.

Its subcellular location is the nucleus. It is found in the chromosome. The protein resides in the centromere. The protein localises to the cytoplasm. It localises to the cytoskeleton. Its subcellular location is the spindle. Functionally, component of the chromosomal passenger complex (CPC), a complex that acts as a key regulator of chromosome segregation and cytokinesis during mitosis. The CPC complex has essential functions at the centromere in ensuring correct chromosome alignment and segregation. In the complex, it may be required to direct the Aurora B/air-2 to centromeric DNA. This chain is Chromosome segregation and cytokinesis defective protein 1 (csc-1), found in Caenorhabditis elegans.